A 163-amino-acid chain; its full sequence is Deoxyuridine 5'-triphosphate nucleotidohydrolase (163 aa).

Substrate contacts are provided by residues 78-80, N91, and 95-97; these read RSG and TVD. The segment covering 140-151 has biased composition (basic and acidic residues); sequence ERESLNETERGD. A disordered region spans residues 140–163; that stretch reads ERESLNETERGDGGFGHTGVNSQP.

Belongs to the dUTPase family. Mg(2+) is required as a cofactor.

The catalysed reaction is dUTP + H2O = dUMP + diphosphate + H(+). The protein operates within pyrimidine metabolism; dUMP biosynthesis; dUMP from dCTP (dUTP route): step 2/2. Functionally, this enzyme is involved in nucleotide metabolism: it produces dUMP, the immediate precursor of thymidine nucleotides and it decreases the intracellular concentration of dUTP so that uracil cannot be incorporated into DNA. This chain is Deoxyuridine 5'-triphosphate nucleotidohydrolase, found in Heliobacterium modesticaldum (strain ATCC 51547 / Ice1).